Reading from the N-terminus, the 394-residue chain is 8-amino-7-oxononanoate synthase (394 aa).

Arg-21 contacts substrate. Residue 112-113 (GY) participates in pyridoxal 5'-phosphate binding. Position 137 (His-137) interacts with substrate. Pyridoxal 5'-phosphate-binding residues include Ser-183, His-211, and Thr-239. An N6-(pyridoxal phosphate)lysine modification is found at Lys-242. Residue Thr-358 participates in substrate binding.

Belongs to the class-II pyridoxal-phosphate-dependent aminotransferase family. BioF subfamily. As to quaternary structure, homodimer. Pyridoxal 5'-phosphate serves as cofactor.

The catalysed reaction is 6-carboxyhexanoyl-[ACP] + L-alanine + H(+) = (8S)-8-amino-7-oxononanoate + holo-[ACP] + CO2. It functions in the pathway cofactor biosynthesis; biotin biosynthesis. Its function is as follows. Catalyzes the decarboxylative condensation of pimeloyl-[acyl-carrier protein] and L-alanine to produce 8-amino-7-oxononanoate (AON), [acyl-carrier protein], and carbon dioxide. This is 8-amino-7-oxononanoate synthase from Burkholderia pseudomallei (strain 1710b).